A 362-amino-acid chain; its full sequence is Molybdenum import ATP-binding protein ModC (362 aa).

In terms of domain architecture, ABC transporter spans 2–236; the sequence is ASPIEVRLHM…LDLPLAMGGD (235 aa). Residue 34-41 participates in ATP binding; that stretch reads GPSGSGKT. In terms of domain architecture, Mop spans 297 to 362; the sequence is QSSILNRLPV…AQIKAVAVLA (66 aa).

The protein belongs to the ABC transporter superfamily. Molybdate importer (TC 3.A.1.8) family. The complex is composed of two ATP-binding proteins (ModC), two transmembrane proteins (ModB) and a solute-binding protein (ModA).

It is found in the cell inner membrane. The catalysed reaction is molybdate(out) + ATP + H2O = molybdate(in) + ADP + phosphate + H(+). Part of the ABC transporter complex ModABC involved in molybdenum import. Responsible for energy coupling to the transport system. This chain is Molybdenum import ATP-binding protein ModC, found in Pseudomonas savastanoi pv. phaseolicola (strain 1448A / Race 6) (Pseudomonas syringae pv. phaseolicola (strain 1448A / Race 6)).